The primary structure comprises 167 residues: Putative 4-hydroxy-4-methyl-2-oxoglutarate aldolase (167 aa).

Substrate contacts are provided by residues 81–84 (GDII) and Arg103. Asp104 provides a ligand contact to a divalent metal cation.

This sequence belongs to the class II aldolase/RraA-like family. In terms of assembly, homotrimer. It depends on a divalent metal cation as a cofactor.

The catalysed reaction is 4-hydroxy-4-methyl-2-oxoglutarate = 2 pyruvate. The enzyme catalyses oxaloacetate + H(+) = pyruvate + CO2. Functionally, catalyzes the aldol cleavage of 4-hydroxy-4-methyl-2-oxoglutarate (HMG) into 2 molecules of pyruvate. Also contains a secondary oxaloacetate (OAA) decarboxylase activity due to the common pyruvate enolate transition state formed following C-C bond cleavage in the retro-aldol and decarboxylation reactions. This Corynebacterium jeikeium (strain K411) protein is Putative 4-hydroxy-4-methyl-2-oxoglutarate aldolase.